Reading from the N-terminus, the 158-residue chain is MGRFIFVSFGLLVVFLSLSGAKGSCCTNDSLPMNGMCYKIFDEPKTWEDAEMFCRKYKPGCHLASFHRLAESLDIAEYISDYHKRQAEVWIGLLDRKKDFSWEWTDRSCTDYLNWDKNQPDHYKDKEFCVELVSLTGYHRWNDQVCESKNSFLCQCKF.

The first 23 residues, methionine 1–glycine 23, serve as a signal peptide directing secretion. The C-type lectin domain maps to serine 24–phenylalanine 158. Intrachain disulfides connect cysteine 26–cysteine 37, cysteine 54–cysteine 154, cysteine 61–cysteine 156, and cysteine 129–cysteine 146. A glycan (N-linked (GlcNAc...) (high mannose) asparagine) is linked at asparagine 28. Residues glutamine 119, aspartate 121, glutamate 127, asparagine 142, and aspartate 143 each coordinate Ca(2+). The short motif at glutamine 119–aspartate 121 is the Galactose-binding element.

Belongs to the true venom lectin family. Homodimer; disulfide-linked. In terms of tissue distribution, expressed by the venom gland.

It is found in the secreted. Its function is as follows. Galactose-binding protein which recognizes specific carbohydrate structures and agglutinates a variety of animal cells by binding to cell-surface glycoproteins and glycolipids. May be a calcium-dependent lectin. The protein is C-type lectin TsL of Trimeresurus stejnegeri (Chinese green tree viper).